The sequence spans 205 residues: Large ribosomal subunit protein uL4 (205 aa).

Polar residues predominate over residues 43 to 60; that stretch reads ARSGNRAQQTRAEVSAST. Residues 43–96 are disordered; that stretch reads ARSGNRAQQTRAEVSASTHKPWRQKGTGRARSGRASSPIWRGGGVTFPNKPNEN. Positions 62 to 74 are enriched in basic residues; it reads KPWRQKGTGRARS.

The protein belongs to the universal ribosomal protein uL4 family. Part of the 50S ribosomal subunit.

Its function is as follows. One of the primary rRNA binding proteins, this protein initially binds near the 5'-end of the 23S rRNA. It is important during the early stages of 50S assembly. It makes multiple contacts with different domains of the 23S rRNA in the assembled 50S subunit and ribosome. In terms of biological role, forms part of the polypeptide exit tunnel. This Thiobacillus denitrificans (strain ATCC 25259 / T1) protein is Large ribosomal subunit protein uL4.